A 204-amino-acid polypeptide reads, in one-letter code: NADH-quinone oxidoreductase subunit C (204 aa).

This sequence belongs to the complex I 30 kDa subunit family. NDH-1 is composed of 14 different subunits. Subunits NuoB, C, D, E, F, and G constitute the peripheral sector of the complex.

Its subcellular location is the cell inner membrane. The enzyme catalyses a quinone + NADH + 5 H(+)(in) = a quinol + NAD(+) + 4 H(+)(out). NDH-1 shuttles electrons from NADH, via FMN and iron-sulfur (Fe-S) centers, to quinones in the respiratory chain. The immediate electron acceptor for the enzyme in this species is believed to be ubiquinone. Couples the redox reaction to proton translocation (for every two electrons transferred, four hydrogen ions are translocated across the cytoplasmic membrane), and thus conserves the redox energy in a proton gradient. This Polaromonas naphthalenivorans (strain CJ2) protein is NADH-quinone oxidoreductase subunit C.